The chain runs to 274 residues: 2,3,4,5-tetrahydropyridine-2,6-dicarboxylate N-succinyltransferase (274 aa).

Substrate-binding residues include R104 and D141.

The protein belongs to the transferase hexapeptide repeat family. As to quaternary structure, homotrimer.

The protein resides in the cytoplasm. It carries out the reaction (S)-2,3,4,5-tetrahydrodipicolinate + succinyl-CoA + H2O = (S)-2-succinylamino-6-oxoheptanedioate + CoA. It functions in the pathway amino-acid biosynthesis; L-lysine biosynthesis via DAP pathway; LL-2,6-diaminopimelate from (S)-tetrahydrodipicolinate (succinylase route): step 1/3. The polypeptide is 2,3,4,5-tetrahydropyridine-2,6-dicarboxylate N-succinyltransferase (Shewanella loihica (strain ATCC BAA-1088 / PV-4)).